A 200-amino-acid polypeptide reads, in one-letter code: Probable GTP-binding protein EngB (200 aa).

An EngB-type G domain is found at 22 to 199 (NVAEVAFLGR…QDKITGYLFG (178 aa)). GTP-binding positions include 30–37 (GRSNVGKS), 57–61 (GKTQL), 85–88 (DLPG), 155–158 (TKID), and 177–180 (FLSN). The Mg(2+) site is built by Ser-37 and Thr-59.

Belongs to the TRAFAC class TrmE-Era-EngA-EngB-Septin-like GTPase superfamily. EngB GTPase family. Mg(2+) is required as a cofactor.

Functionally, necessary for normal cell division and for the maintenance of normal septation. The polypeptide is Probable GTP-binding protein EngB (Aliarcobacter butzleri (strain RM4018) (Arcobacter butzleri)).